The chain runs to 257 residues: 1-acyl-sn-glycerol-3-phosphate acyltransferase (257 aa).

Residues 10-30 (VLFYLLLSASAFVWGTLSFFI) traverse the membrane as a helical segment. An HXXXXD motif motif is present at residues 82–87 (HQSTWE). The helical transmembrane segment at 105–125 (ELLYVPFFGWALALLKPIAID) threads the bilayer.

Belongs to the 1-acyl-sn-glycerol-3-phosphate acyltransferase family.

Its subcellular location is the cell inner membrane. It catalyses the reaction a 1-acyl-sn-glycero-3-phosphate + an acyl-CoA = a 1,2-diacyl-sn-glycero-3-phosphate + CoA. It participates in phospholipid metabolism; CDP-diacylglycerol biosynthesis; CDP-diacylglycerol from sn-glycerol 3-phosphate: step 2/3. Converts lysophosphatidic acid (LPA) into phosphatidic acid by incorporating acyl moiety at the 2 position. This chain is 1-acyl-sn-glycerol-3-phosphate acyltransferase, found in Pseudomonas aeruginosa (strain ATCC 15692 / DSM 22644 / CIP 104116 / JCM 14847 / LMG 12228 / 1C / PRS 101 / PAO1).